We begin with the raw amino-acid sequence, 399 residues long: Dual-specificity RNA methyltransferase RlmN (399 aa).

The Proton acceptor role is filled by E122. Positions 128–371 (ETDRGTLCVS…VRTPRGRDIL (244 aa)) constitute a Radical SAM core domain. C135 and C374 are oxidised to a cystine. Residues C142, C146, and C149 each coordinate [4Fe-4S] cluster. S-adenosyl-L-methionine is bound by residues 200-201 (GE), S232, 254-256 (SLH), and N331. C374 serves as the catalytic S-methylcysteine intermediate.

Belongs to the radical SAM superfamily. RlmN family. Requires [4Fe-4S] cluster as cofactor.

The protein resides in the cytoplasm. The enzyme catalyses adenosine(2503) in 23S rRNA + 2 reduced [2Fe-2S]-[ferredoxin] + 2 S-adenosyl-L-methionine = 2-methyladenosine(2503) in 23S rRNA + 5'-deoxyadenosine + L-methionine + 2 oxidized [2Fe-2S]-[ferredoxin] + S-adenosyl-L-homocysteine. It carries out the reaction adenosine(37) in tRNA + 2 reduced [2Fe-2S]-[ferredoxin] + 2 S-adenosyl-L-methionine = 2-methyladenosine(37) in tRNA + 5'-deoxyadenosine + L-methionine + 2 oxidized [2Fe-2S]-[ferredoxin] + S-adenosyl-L-homocysteine. Its function is as follows. Specifically methylates position 2 of adenine 2503 in 23S rRNA and position 2 of adenine 37 in tRNAs. m2A2503 modification seems to play a crucial role in the proofreading step occurring at the peptidyl transferase center and thus would serve to optimize ribosomal fidelity. This is Dual-specificity RNA methyltransferase RlmN from Rhodopseudomonas palustris (strain BisB18).